A 354-amino-acid chain; its full sequence is Uroporphyrinogen decarboxylase (354 aa).

Residues 27–31 (RQAGR), Asp-77, Tyr-154, Ser-209, and His-327 contribute to the substrate site.

Belongs to the uroporphyrinogen decarboxylase family. As to quaternary structure, homodimer.

The protein localises to the cytoplasm. The enzyme catalyses uroporphyrinogen III + 4 H(+) = coproporphyrinogen III + 4 CO2. It functions in the pathway porphyrin-containing compound metabolism; protoporphyrin-IX biosynthesis; coproporphyrinogen-III from 5-aminolevulinate: step 4/4. Its function is as follows. Catalyzes the decarboxylation of four acetate groups of uroporphyrinogen-III to yield coproporphyrinogen-III. The chain is Uroporphyrinogen decarboxylase from Pseudoalteromonas translucida (strain TAC 125).